A 71-amino-acid chain; its full sequence is MSDQKTAELNKMIEEISQKLNMLNIGVIKAEDFSNEKLEDLEYLHQMVMKKKSFSPSEMQAIAEELAALRK.

This sequence belongs to the UPF0435 family.

This is UPF0435 protein BLi00816/BL03111 from Bacillus licheniformis (strain ATCC 14580 / DSM 13 / JCM 2505 / CCUG 7422 / NBRC 12200 / NCIMB 9375 / NCTC 10341 / NRRL NRS-1264 / Gibson 46).